A 25-amino-acid polypeptide reads, in one-letter code: Ocellatin-L2 (25 aa).

A Leucine amide modification is found at leucine 25.

The protein belongs to the frog skin active peptide (FSAP) family. Ocellatin subfamily. Expressed by the skin glands.

The protein localises to the secreted. In terms of biological role, shows a low activity in stimulating insulin release from rat BRIN-BD11 beta cells, and acts without loss of integrity of the plasma membrane. Does not show antibacterial (E.coli and S.aureus). Does not show hemolytic activity against human erythrocytes. The chain is Ocellatin-L2 from Leptodactylus laticeps (Santa Fe frog).